Reading from the N-terminus, the 59-residue chain is Small, acid-soluble spore protein C1 (59 aa).

The protein belongs to the alpha/beta-type SASP family. In terms of processing, SASP are degraded in the first minutes of spore germination and provide amino acids for both new protein synthesis and metabolism.

Its function is as follows. SASP are bound to spore DNA. They are double-stranded DNA-binding proteins that cause DNA to change to an a-like conformation. They protect the DNA backbone from chemical and enzymatic cleavage and are thus involved in dormant spore's high resistance to UV light. The chain is Small, acid-soluble spore protein C1 (sspC1) from Clostridium perfringens (strain 13 / Type A).